The following is a 235-amino-acid chain: Ribonuclease 3 (235 aa).

In terms of domain architecture, RNase III spans 6–131; the sequence is IDQLEKLTGH…LIAVIYLDGG (126 aa). Glu-44 serves as a coordination point for Mg(2+). Asp-48 is an active-site residue. Mg(2+)-binding residues include Asp-117 and Glu-120. Glu-120 is a catalytic residue. The 70-residue stretch at 156–225 folds into the DRBM domain; sequence DAKTQLQEWA…AEKILRREGI (70 aa).

It belongs to the ribonuclease III family. Homodimer. It depends on Mg(2+) as a cofactor.

It localises to the cytoplasm. The enzyme catalyses Endonucleolytic cleavage to 5'-phosphomonoester.. In terms of biological role, digests double-stranded RNA. Involved in the processing of primary rRNA transcript to yield the immediate precursors to the large and small rRNAs (23S and 16S). Processes some mRNAs, and tRNAs when they are encoded in the rRNA operon. Processes pre-crRNA and tracrRNA of type II CRISPR loci if present in the organism. This Bartonella henselae (strain ATCC 49882 / DSM 28221 / CCUG 30454 / Houston 1) (Rochalimaea henselae) protein is Ribonuclease 3.